The following is a 300-amino-acid chain: uncharacterized protein (300 aa).

3 Solcar repeats span residues 10–101 (ESQT…VKDF), 119–199 (GKAI…AKEY), and 212–294 (FQNF…LIPF). Helical transmembrane passes span 16–36 (IVGS…VDTI), 70–86 (ATSL…YKIV), 121–141 (AIMH…LLPL), 178–198 (TAAR…FAKE), 215–235 (FFTS…LDVI), and 275–295 (LTTG…IPFF).

This sequence belongs to the mitochondrial carrier (TC 2.A.29) family.

The protein localises to the mitochondrion inner membrane. This is an uncharacterized protein from Schizosaccharomyces pombe (strain 972 / ATCC 24843) (Fission yeast).